A 362-amino-acid chain; its full sequence is Manganese peroxidase 3 (362 aa).

Positions 1 to 18 are cleaved as a signal peptide; that stretch reads MAFKQLLTAISIVSVANA. Residues 19–23 constitute a propeptide that is removed on maturation; sequence ALTRR. Intrachain disulfides connect cysteine 26–cysteine 39, cysteine 38–cysteine 309, cysteine 58–cysteine 144, and cysteine 273–cysteine 338. Mn(2+) is bound by residues glutamate 60 and glutamate 64. Histidine 71 acts as the Proton acceptor in catalysis. The Ca(2+) site is built by aspartate 72, glycine 90, aspartate 92, and serine 94. Asparagine 126 carries N-linked (GlcNAc...) asparagine glycosylation. Histidine 200 serves as a coordination point for heme b. Residue threonine 201 coordinates Ca(2+). Aspartate 206 is a binding site for Mn(2+). Positions 218, 220, 223, and 225 each coordinate Ca(2+). Positions 341-362 are disordered; sequence TPFPSLSADPGPATSVAPVPPS.

This sequence belongs to the peroxidase family. Ligninase subfamily. Heme b is required as a cofactor. Requires Ca(2+) as cofactor.

It is found in the secreted. The catalysed reaction is 2 Mn(2+) + H2O2 + 2 H(+) = 2 Mn(3+) + 2 H2O. Catalyzes the oxidation of Mn(2+) to Mn(3+). The latter, acting as a diffusible redox mediator, is capable of oxidizing a variety of lignin compounds. This isozyme is also able to oxidize phenols and amines in the absence of Mn(2+), similar to versatile peroxidases. This is Manganese peroxidase 3 (mnp3) from Phlebia radiata (White-rot fungus).